Here is a 384-residue protein sequence, read N- to C-terminus: Urea transporter 1 (384 aa).

Residues Met-1–Arg-23 are disordered. The next 5 membrane-spanning stretches (helical) occupy residues Ile-61–Leu-81, Pro-85–Leu-105, Ala-111–Tyr-131, Phe-138–Ala-158, and Leu-168–His-188. Asn-206 carries N-linked (GlcNAc...) asparagine glycosylation. Transmembrane regions (helical) follow at residues Gly-237–Ile-257, Gly-279–Leu-299, and Val-327–Leu-347.

The protein belongs to the urea transporter family. Homotrimer; each subunit contains a pore through which urea permeates. Identified in a complex with STOM.

The protein resides in the cell membrane. Its subcellular location is the basolateral cell membrane. The catalysed reaction is urea(in) = urea(out). In terms of biological role, mediates the transport of urea driven by a concentration gradient across the cell membranes of erythrocytes and the renal inner medullary collecting duct which is critical to the urinary concentrating mechanism. Facilitates water transport in erythrocytes. The chain is Urea transporter 1 (SLC14A1) from Capra hircus (Goat).